The sequence spans 205 residues: tRNA (guanine-N(7)-)-methyltransferase (205 aa).

S-adenosyl-L-methionine contacts are provided by glutamate 36, glutamate 61, aspartate 88, and aspartate 109. The active site involves aspartate 109. Lysine 113 serves as a coordination point for substrate. The interval 115–120 (RHEKRR) is interaction with RNA. Residues aspartate 145 and 183-186 (TGYE) each bind substrate.

The protein belongs to the class I-like SAM-binding methyltransferase superfamily. TrmB family.

The catalysed reaction is guanosine(46) in tRNA + S-adenosyl-L-methionine = N(7)-methylguanosine(46) in tRNA + S-adenosyl-L-homocysteine. It participates in tRNA modification; N(7)-methylguanine-tRNA biosynthesis. Its function is as follows. Catalyzes the formation of N(7)-methylguanine at position 46 (m7G46) in tRNA. The protein is tRNA (guanine-N(7)-)-methyltransferase of Mycoplasmopsis agalactiae (strain NCTC 10123 / CIP 59.7 / PG2) (Mycoplasma agalactiae).